Reading from the N-terminus, the 144-residue chain is Transcription antitermination protein NusB (144 aa).

This sequence belongs to the NusB family.

In terms of biological role, involved in transcription antitermination. Required for transcription of ribosomal RNA (rRNA) genes. Binds specifically to the boxA antiterminator sequence of the ribosomal RNA (rrn) operons. This chain is Transcription antitermination protein NusB, found in Haemophilus influenzae (strain 86-028NP).